The following is a 95-amino-acid chain: UPF0213 protein YPK_3712 (95 aa).

The 76-residue stretch at 4–79 folds into the GIY-YIG domain; the sequence is SLWHLYLLRT…KQLSKQQKEK (76 aa).

It belongs to the UPF0213 family.

This Yersinia pseudotuberculosis serotype O:3 (strain YPIII) protein is UPF0213 protein YPK_3712.